The chain runs to 265 residues: Aquaporin-5 (265 aa).

Topologically, residues 1-12 (MKKEVCSLAFFK) are cytoplasmic. A helical transmembrane segment spans residues 13–33 (AVFAEFLATLIFVFFGLGSAL). Topologically, residues 34–39 (KWPSAL) are extracellular. A helical membrane pass occupies residues 40–60 (PTILQISIAFGLAIGTLAQAL). The Cytoplasmic segment spans residues 61–65 (GPVSG). The segment at residues 66–74 (GHINPAITL) is an intramembrane region (discontinuously helical). Residues 69-71 (NPA) carry the NPA 1 motif. Residues 75 to 87 (ALLIGNQISLLRA) are Cytoplasmic-facing. A helical membrane pass occupies residues 88-108 (VFYVAAQLVGAIAGAGILYWL). Residues 109-126 (APLNARGNLAVNALNNNT) lie on the Extracellular side of the membrane. Asn-124 carries N-linked (GlcNAc...) asparagine glycosylation. The helical transmembrane segment at 127–147 (TPGKAMVVELILTFQLALCIF) threads the bilayer. Topologically, residues 148–158 (SSTDSRRTSPV) are cytoplasmic. Residues 159 to 179 (GSPALSIGLSVTLGHLVGIYF) traverse the membrane as a helical segment. Residue Thr-180 is a topological domain, extracellular. Residues 181-191 (GCSMNPARSFG) constitute an intramembrane region (discontinuously helical). Positions 185 to 187 (NPA) match the NPA 2 motif. Residues 192-203 (PAVVMNRFSPSH) are Extracellular-facing. The helical transmembrane segment at 204–224 (WVFWVGPIVGAMLAAILYFYL) threads the bilayer. Topologically, residues 225-265 (LFPSSLSLHDRVAVVKGTYEPEEDWEDHREERKKTIELTAH) are cytoplasmic.

It belongs to the MIP/aquaporin (TC 1.A.8) family. As to quaternary structure, homotetramer; each monomer provides an independent water pore. Interacts with TRPV4; the interaction is probably indirect and regulates TRPV4 activation by hypotonicity. Salivary glands, lacrimal glands, corneal epithelium in eye, trachea and lung.

Its subcellular location is the apical cell membrane. It is found in the cell membrane. The protein localises to the cytoplasmic vesicle membrane. It carries out the reaction H2O(in) = H2O(out). In terms of biological role, aquaporins form homotetrameric transmembrane channels, with each monomer independently mediating water transport across the plasma membrane along its osmotic gradient. Plays an important role in fluid secretion in salivary glands. Required for TRPV4 activation by hypotonicity. Together with TRPV4, controls regulatory volume decrease in salivary epithelial cells. Seems to play a redundant role in water transport in the eye, lung and in sweat glands. The protein is Aquaporin-5 of Rattus norvegicus (Rat).